We begin with the raw amino-acid sequence, 125 residues long: Ribosome-binding factor A (125 aa).

It belongs to the RbfA family. In terms of assembly, monomer. Binds 30S ribosomal subunits, but not 50S ribosomal subunits or 70S ribosomes.

The protein resides in the cytoplasm. Its function is as follows. One of several proteins that assist in the late maturation steps of the functional core of the 30S ribosomal subunit. Associates with free 30S ribosomal subunits (but not with 30S subunits that are part of 70S ribosomes or polysomes). Required for efficient processing of 16S rRNA. May interact with the 5'-terminal helix region of 16S rRNA. The sequence is that of Ribosome-binding factor A from Methylobacillus flagellatus (strain ATCC 51484 / DSM 6875 / VKM B-1610 / KT).